The sequence spans 101 residues: Large ribosomal subunit protein uL23 (101 aa).

It belongs to the universal ribosomal protein uL23 family. In terms of assembly, part of the 50S ribosomal subunit. Contacts protein L29, and trigger factor when it is bound to the ribosome.

In terms of biological role, one of the early assembly proteins it binds 23S rRNA. One of the proteins that surrounds the polypeptide exit tunnel on the outside of the ribosome. Forms the main docking site for trigger factor binding to the ribosome. The chain is Large ribosomal subunit protein uL23 from Trichodesmium erythraeum (strain IMS101).